We begin with the raw amino-acid sequence, 142 residues long: Mediator of RNA polymerase II transcription subunit 21 (142 aa).

Residues 87–131 (AEEQLSRIDSLQKKLIQVEGEKIEAIKRKESLTKDIEELINEFTE) are a coiled coil.

Belongs to the Mediator complex subunit 21 family. Component of the Mediator complex.

The protein resides in the nucleus. Its function is as follows. Component of the Mediator complex, a coactivator involved in the regulated transcription of nearly all RNA polymerase II-dependent genes. Mediator functions as a bridge to convey information from gene-specific regulatory proteins to the basal RNA polymerase II transcription machinery. Mediator is recruited to promoters by direct interactions with regulatory proteins and serves as a scaffold for the assembly of a functional preinitiation complex with RNA polymerase II and the general transcription factors. This Eremothecium gossypii (strain ATCC 10895 / CBS 109.51 / FGSC 9923 / NRRL Y-1056) (Yeast) protein is Mediator of RNA polymerase II transcription subunit 21 (SRB7).